The primary structure comprises 243 residues: UPF0246 protein SAG2081 (243 aa).

The protein belongs to the UPF0246 family.

The chain is UPF0246 protein SAG2081 from Streptococcus agalactiae serotype V (strain ATCC BAA-611 / 2603 V/R).